The primary structure comprises 306 residues: MGARLGRRARADAPAAPSAGPAPYERRVRWLREIQSTLRERRPERARQLLRLLRQDLGLEGNLLTDILHRNVTFLNLVDPISHDLLVNLARDLQCPKKDHELWKSSDKICRQLIYHLTPHSKRKHHRKTQSSLKSSLQKTLLVGETVDLSGIPLSARDVQHISRYLDTRGVELVVLDLSFTELSDELLHLLLPSLWALPRLTQLLLNGNRLTRAAARELTEAIKDTAKFPVLAWVDLGNNVDVSSLPQPLLVGLRRRLSQHTSLPTIYEGLDLEPGGGMAETTAAVSTWGSAATEAGPEPQGCCAR.

A disordered region spans residues 1-22; the sequence is MGARLGRRARADAPAAPSAGPA. A compositionally biased stretch (low complexity) spans 12–22; that stretch reads DAPAAPSAGPA. LRR repeat units follow at residues 173–186 and 198–211; these read LVVL…LSDE and LPRL…GNRL.

It belongs to the LRRC75 family.

Functionally, may suppress myogenic differentiation by modulating MYOG expression and Erk1/2 signaling. This is Leucine-rich repeat-containing protein 75B from Mus musculus (Mouse).